We begin with the raw amino-acid sequence, 107 residues long: Quaternary ammonium compound-resistance protein QacH (107 aa).

Helical transmembrane passes span 1-21 (MPYL…AFLK), 26-46 (FSKL…FYFL), 57-77 (ITYA…SVLI), and 84-104 (LISI…NTFG).

The protein belongs to the drug/metabolite transporter (DMT) superfamily. Small multidrug resistance (SMR) (TC 2.A.7.1) family.

Its subcellular location is the cell membrane. Its function is as follows. Multidrug exporter. Is implicated for the resistance to bacteriocidal quaternary ammonium compounds. This Staphylococcus saprophyticus protein is Quaternary ammonium compound-resistance protein QacH (qacH).